The chain runs to 349 residues: Peptide transport system ATP-binding protein SapD (349 aa).

One can recognise an ABC transporter domain in the interval 1 to 259; the sequence is MALLDICNLN…PHHPYTQALI (259 aa). 40-47 contributes to the ATP binding site; sequence GESGSGKS.

It belongs to the ABC transporter superfamily.

The protein localises to the cell inner membrane. Involved in a peptide intake transport system that plays a role in the resistance to antimicrobial peptides. The sequence is that of Peptide transport system ATP-binding protein SapD (sapD) from Haemophilus influenzae (strain ATCC 51907 / DSM 11121 / KW20 / Rd).